The following is a 177-amino-acid chain: ATP synthase subunit delta (177 aa).

Belongs to the ATPase delta chain family. F-type ATPases have 2 components, F(1) - the catalytic core - and F(0) - the membrane proton channel. F(1) has five subunits: alpha(3), beta(3), gamma(1), delta(1), epsilon(1). F(0) has three main subunits: a(1), b(2) and c(10-14). The alpha and beta chains form an alternating ring which encloses part of the gamma chain. F(1) is attached to F(0) by a central stalk formed by the gamma and epsilon chains, while a peripheral stalk is formed by the delta and b chains.

It localises to the cell inner membrane. F(1)F(0) ATP synthase produces ATP from ADP in the presence of a proton or sodium gradient. F-type ATPases consist of two structural domains, F(1) containing the extramembraneous catalytic core and F(0) containing the membrane proton channel, linked together by a central stalk and a peripheral stalk. During catalysis, ATP synthesis in the catalytic domain of F(1) is coupled via a rotary mechanism of the central stalk subunits to proton translocation. Its function is as follows. This protein is part of the stalk that links CF(0) to CF(1). It either transmits conformational changes from CF(0) to CF(1) or is implicated in proton conduction. The protein is ATP synthase subunit delta of Shigella dysenteriae serotype 1 (strain Sd197).